Consider the following 432-residue polypeptide: UDP-N-acetylmuramate--L-alanine ligase (432 aa).

108-114 contributes to the ATP binding site; that stretch reads GAHGKTS.

Belongs to the MurCDEF family.

The protein resides in the cytoplasm. The catalysed reaction is UDP-N-acetyl-alpha-D-muramate + L-alanine + ATP = UDP-N-acetyl-alpha-D-muramoyl-L-alanine + ADP + phosphate + H(+). The protein operates within cell wall biogenesis; peptidoglycan biosynthesis. Its function is as follows. Cell wall formation. The chain is UDP-N-acetylmuramate--L-alanine ligase from Bacillus licheniformis (strain ATCC 14580 / DSM 13 / JCM 2505 / CCUG 7422 / NBRC 12200 / NCIMB 9375 / NCTC 10341 / NRRL NRS-1264 / Gibson 46).